A 174-amino-acid polypeptide reads, in one-letter code: Crossover junction endodeoxyribonuclease RuvC (174 aa).

Active-site residues include Asp8, Glu67, and Asp139. Mg(2+) is bound by residues Asp8, Glu67, and Asp139.

Belongs to the RuvC family. In terms of assembly, homodimer which binds Holliday junction (HJ) DNA. The HJ becomes 2-fold symmetrical on binding to RuvC with unstacked arms; it has a different conformation from HJ DNA in complex with RuvA. In the full resolvosome a probable DNA-RuvA(4)-RuvB(12)-RuvC(2) complex forms which resolves the HJ. Mg(2+) serves as cofactor.

The protein resides in the cytoplasm. The enzyme catalyses Endonucleolytic cleavage at a junction such as a reciprocal single-stranded crossover between two homologous DNA duplexes (Holliday junction).. In terms of biological role, the RuvA-RuvB-RuvC complex processes Holliday junction (HJ) DNA during genetic recombination and DNA repair. Endonuclease that resolves HJ intermediates. Cleaves cruciform DNA by making single-stranded nicks across the HJ at symmetrical positions within the homologous arms, yielding a 5'-phosphate and a 3'-hydroxyl group; requires a central core of homology in the junction. The consensus cleavage sequence is 5'-(A/T)TT(C/G)-3'. Cleavage occurs on the 3'-side of the TT dinucleotide at the point of strand exchange. HJ branch migration catalyzed by RuvA-RuvB allows RuvC to scan DNA until it finds its consensus sequence, where it cleaves and resolves the cruciform DNA. The sequence is that of Crossover junction endodeoxyribonuclease RuvC from Pseudomonas savastanoi pv. phaseolicola (strain 1448A / Race 6) (Pseudomonas syringae pv. phaseolicola (strain 1448A / Race 6)).